The chain runs to 169 residues: MQDLLFEYKRTLKQTRIQYKPLAEADESVLSAEELKDKKIIRNMITDLEYVTEWLEKGRQPGIRRAIDRRDVYQRLMIKDPRIIESFSSAMMFEPDGQVSEEDRDRIREALALLTDREKEMFLLHKVECFSYERIADLLGVKKSTVQTTIKRASLKMQRQQEEMNRSLA.

The segment at residues 132–157 (YERIADLLGVKKSTVQTTIKRASLKM) is a DNA-binding region (H-T-H motif).

Functionally, positive regulatory protein that acts at the late promoter PL. The sequence is that of Positive control factor (xpf) from Bacillus subtilis (strain 168).